We begin with the raw amino-acid sequence, 478 residues long: Chromosomal replication initiator protein DnaA (478 aa).

The domain I, interacts with DnaA modulators stretch occupies residues 1–90; the sequence is MSVELWQQCV…KRSSAPRAVQ (90 aa). The tract at residues 91–141 is domain II; sequence PASPPPAVVQAAPVAIEEASAARTVDAQPVAPATVRTERSVQVEGGLKHTS. The domain III, AAA+ region stretch occupies residues 142-358; sequence YLNRAFTFEN…GALKRVIAHS (217 aa). The ATP site is built by Gly-186, Gly-188, Lys-189, and Thr-190. The segment at 359-478 is domain IV, binds dsDNA; that stretch reads HFTNHPITIE…YKNLLRTLTT (120 aa).

The protein belongs to the DnaA family. As to quaternary structure, oligomerizes as a right-handed, spiral filament on DNA at oriC.

The protein resides in the cytoplasm. In terms of biological role, plays an essential role in the initiation and regulation of chromosomal replication. ATP-DnaA binds to the origin of replication (oriC) to initiate formation of the DNA replication initiation complex once per cell cycle. Binds the DnaA box (a 9 base pair repeat at the origin) and separates the double-stranded (ds)DNA. Forms a right-handed helical filament on oriC DNA; dsDNA binds to the exterior of the filament while single-stranded (ss)DNA is stabiized in the filament's interior. The ATP-DnaA-oriC complex binds and stabilizes one strand of the AT-rich DNA unwinding element (DUE), permitting loading of DNA polymerase. After initiation quickly degrades to an ADP-DnaA complex that is not apt for DNA replication. Binds acidic phospholipids. The chain is Chromosomal replication initiator protein DnaA from Azotobacter vinelandii (strain DJ / ATCC BAA-1303).